We begin with the raw amino-acid sequence, 273 residues long: Shikimate dehydrogenase (NADP(+)) (273 aa).

Shikimate is bound by residues 19–21 and threonine 66; that span reads SQS. The active-site Proton acceptor is lysine 70. Residue glutamate 82 participates in NADP(+) binding. Residues asparagine 91 and aspartate 107 each contribute to the shikimate site. NADP(+)-binding positions include 131–135 and methionine 217; that span reads GAGGA. Tyrosine 219 contacts shikimate. Residue glycine 241 coordinates NADP(+).

This sequence belongs to the shikimate dehydrogenase family. In terms of assembly, homodimer.

The enzyme catalyses shikimate + NADP(+) = 3-dehydroshikimate + NADPH + H(+). Its pathway is metabolic intermediate biosynthesis; chorismate biosynthesis; chorismate from D-erythrose 4-phosphate and phosphoenolpyruvate: step 4/7. Functionally, involved in the biosynthesis of the chorismate, which leads to the biosynthesis of aromatic amino acids. Catalyzes the reversible NADPH linked reduction of 3-dehydroshikimate (DHSA) to yield shikimate (SA). The protein is Shikimate dehydrogenase (NADP(+)) of Buchnera aphidicola subsp. Schizaphis graminum (strain Sg).